Consider the following 64-residue polypeptide: Large ribosomal subunit protein uL29 (64 aa).

The protein belongs to the universal ribosomal protein uL29 family.

This is Large ribosomal subunit protein uL29 from Burkholderia ambifaria (strain MC40-6).